We begin with the raw amino-acid sequence, 431 residues long: MSTIIDVYAREVLDSRGNPTVEVEVYTESGAFGRAIVPSGASTGEHEAVELRDGDKSRYLGKGVMNAVNNVNEAIAPEIVGFDVTDQAGIDRAMIELDGTPNKGKLGANAILGVSMAVAHAAADFVGLPLYRYLGGFNAKQLPTPMMNIINGGSHADNNVDFQEFMILPVGAPTFKESIRMGAEVFHALKAVLHDKGLNTAVGDEGGFAPNLGSNREALEVIIEAIEKAGYKAGENVFLGMDVASSEFYNKETGKYDLAGEGRTGLTSAEMVDFYEELCKDFPIISIEDGLDENDWDGHKLLTERIGDKVQLVGDDLFVTNTQKLAEGIEKGISNSILIKVNQIGTLTETFEAIEMAKRAGYTAVVSHRSGETEDATIADIAVATNAGQIKTGSMSRTDRIAKYNQLLRIEDELGEIAVYDGIKSFYNIKR.

Gln163 provides a ligand contact to (2R)-2-phosphoglycerate. Glu205 (proton donor) is an active-site residue. Residues Asp242, Glu288, and Asp315 each coordinate Mg(2+). (2R)-2-phosphoglycerate is bound by residues Lys340, Arg369, Ser370, and Lys391. Residue Lys340 is the Proton acceptor of the active site.

It belongs to the enolase family. The cofactor is Mg(2+).

The protein localises to the cytoplasm. The protein resides in the secreted. It localises to the cell surface. The catalysed reaction is (2R)-2-phosphoglycerate = phosphoenolpyruvate + H2O. The protein operates within carbohydrate degradation; glycolysis; pyruvate from D-glyceraldehyde 3-phosphate: step 4/5. Its function is as follows. Catalyzes the reversible conversion of 2-phosphoglycerate (2-PG) into phosphoenolpyruvate (PEP). It is essential for the degradation of carbohydrates via glycolysis. This is Enolase from Bacillus anthracis (strain A0248).